Reading from the N-terminus, the 131-residue chain is Profilin-1 (131 aa).

It belongs to the profilin family. As to quaternary structure, occurs in many kinds of cells as a complex with monomeric actin in a 1:1 ratio.

The protein localises to the cytoplasm. The protein resides in the cytoskeleton. Its function is as follows. Binds to actin and affects the structure of the cytoskeleton. At high concentrations, profilin prevents the polymerization of actin, whereas it enhances it at low concentrations. By binding to PIP2, it inhibits the formation of IP3 and DG. This Ricinus communis (Castor bean) protein is Profilin-1 (PRO1).